The sequence spans 415 residues: MLDKLQPLRGMKDLLPDDYKVHDYIINKARDVGVLYGYKQMSTPILEYTKVFNRSMGESSDIISKEIYSFLDKSNESVALRPEFTAGIIRSFISNNLRHKLPLKFFSTGPIFRYDRPQAGRQRQFHQLNYEYIGAKGAMTDAETLKLAVDILKALEIEQDTTLELNSLGCSESRSVYQQKLVEYLNDFKNQLSEESRVRLIKNPMRILDSKNEIDQKIVAAAPILSEYYTDESKEYFEDLIKYLNILGVKYRINPRLVRGLDYYCHTAFEFTTLKLGTQSTILAGGRYDGLAKIMGNNDDMPAIGFAAGIERIALMREYNVSLLSLVVVLPIGKNNICYALEIVDKLRTKNIATIIEPTGKIAKRMQRVLNENAKFIIFIGDEEQANNNLKLKDLETQEEYILDFAKTLELLKKY.

It belongs to the class-II aminoacyl-tRNA synthetase family. In terms of assembly, homodimer.

The protein localises to the cytoplasm. The enzyme catalyses tRNA(His) + L-histidine + ATP = L-histidyl-tRNA(His) + AMP + diphosphate + H(+). The chain is Histidine--tRNA ligase from Rickettsia canadensis (strain McKiel).